A 394-amino-acid chain; its full sequence is Cytohesin-4 (394 aa).

The stretch at 12–65 forms a coiled coil; the sequence is SSGETEELQRIKWHRKQLLEDIQKLKDEIADVFAQIDCFESAEESRMAQKEKEL. Residues 54 to 241 enclose the SEC7 domain; that stretch reads EESRMAQKEK…RNLFDSIKSE (188 aa). The PH domain maps to 259-375; that stretch reads NPDREGWLLK…WIESIRASIT (117 aa). Residues 268-275, arginine 279, tyrosine 290, and arginine 300 each bind a 1,2-diacyl-sn-glycero-3-phospho-(1D-myo-inositol-3,4,5-trisphosphate); that span reads KLGGRVKT. The segment at 386–394 is C-terminal autoinhibitory region; it reads RKKKIASKQ.

In terms of tissue distribution, expressed predominantly in peripheral blood leukocytes.

The protein localises to the cell membrane. Its function is as follows. Promotes guanine-nucleotide exchange on ARF1 and ARF5. Promotes the activation of ARF factors through replacement of GDP with GTP. The chain is Cytohesin-4 (CYTH4) from Homo sapiens (Human).